Reading from the N-terminus, the 179-residue chain is Large ribosomal subunit protein uL5 (179 aa).

The protein belongs to the universal ribosomal protein uL5 family. In terms of assembly, part of the 50S ribosomal subunit; part of the 5S rRNA/L5/L18/L25 subcomplex. Contacts the 5S rRNA and the P site tRNA. Forms a bridge to the 30S subunit in the 70S ribosome.

In terms of biological role, this is one of the proteins that bind and probably mediate the attachment of the 5S RNA into the large ribosomal subunit, where it forms part of the central protuberance. In the 70S ribosome it contacts protein S13 of the 30S subunit (bridge B1b), connecting the 2 subunits; this bridge is implicated in subunit movement. Contacts the P site tRNA; the 5S rRNA and some of its associated proteins might help stabilize positioning of ribosome-bound tRNAs. This is Large ribosomal subunit protein uL5 from Clostridium beijerinckii (strain ATCC 51743 / NCIMB 8052) (Clostridium acetobutylicum).